Consider the following 705-residue polypeptide: Polyribonucleotide nucleotidyltransferase (705 aa).

Mg(2+) contacts are provided by Asp-487 and Asp-493. The KH domain maps to 554–613; it reads PKILTMAIEPDKIRDVIGPSGKQINQIIDETGVKIDIEQDGSIFISSTDNEMNKKAKQII. Residues 623-691 enclose the S1 motif domain; sequence GQIYLGKVKR…RQGRVNLSRK (69 aa).

Belongs to the polyribonucleotide nucleotidyltransferase family. Mg(2+) is required as a cofactor.

The protein localises to the cytoplasm. The enzyme catalyses RNA(n+1) + phosphate = RNA(n) + a ribonucleoside 5'-diphosphate. In terms of biological role, involved in mRNA degradation. Catalyzes the phosphorolysis of single-stranded polyribonucleotides processively in the 3'- to 5'-direction. The sequence is that of Polyribonucleotide nucleotidyltransferase from Oceanobacillus iheyensis (strain DSM 14371 / CIP 107618 / JCM 11309 / KCTC 3954 / HTE831).